Reading from the N-terminus, the 258-residue chain is MPIEAVAVASLPMASRSAALCFSSAAAARSRSRSRHGRMAVSCDAGASDLLYSSLAAKLLGPPTSFDAGKLTVEFAHSHGNSSSGFPRAYTLTHCDFTANLTLAVSDTIAADRRLRADDVFAEWKQQQQQEGMALHVHCFVSGANLLHGLAAGFRYYVFSKELPLVLKAVVHGDALLFAEQPELLEAKVWVHFHSSSNAKYNRLECWGPLREAANAETTHKRHALEQLHNAITKGTRRRRRKWSSPDAIFSALLALLL.

Belongs to the staygreen family. As to expression, strongly expressed in leaves, stems and panicles, and at lower levels in roots and seeds.

In terms of biological role, promotes chlorophyll degradation in leaves. May be involved in LHCI proteins degradation, regulating the balance between LHCI and LHCII. This is Protein STAY-GREEN LIKE, chloroplastic from Oryza sativa subsp. japonica (Rice).